The primary structure comprises 121 residues: uncharacterized protein (121 aa).

This is an uncharacterized protein from Schizosaccharomyces pombe (strain 972 / ATCC 24843) (Fission yeast).